The chain runs to 75 residues: Penaeidin-3l (75 aa).

The first 19 residues, 1–19 (MRLVVCLVFLASFALVCQG), serve as a signal peptide directing secretion. Position 20 is a pyrrolidone carboxylic acid (Gln-20). 3 disulfides stabilise this stretch: Cys-44/Cys-59, Cys-48/Cys-66, and Cys-60/Cys-67. Residue Ser-74 is modified to Serine amide.

This sequence belongs to the penaeidin family.

It localises to the cytoplasmic granule. In terms of biological role, antibacterial and antifungal activity. Presents chitin-binding activity. In Penaeus setiferus (Atlantic white shrimp), this protein is Penaeidin-3l.